The sequence spans 1858 residues: Protein ROS1C (1858 aa).

The segment covering 347–356 (TEALKGEDAP) has biased composition (basic and acidic residues). 2 disordered regions span residues 347–416 (TEAL…AEPF) and 1288–1309 (PDTA…KNSE). Basic residues-rich tracts occupy residues 360 to 370 (LKTRRRKHRPK) and 394 to 404 (KPKRKYVRKNR). Cys1492, Cys1499, Cys1502, and Cys1508 together coordinate [4Fe-4S] cluster.

It belongs to the DNA glycosylase family. DEMETER subfamily. It depends on [4Fe-4S] cluster as a cofactor. In terms of tissue distribution, expressed in pistils and immature seeds. Expressed a low levels in roots, leaves and anthers.

Its subcellular location is the nucleus. Bifunctional DNA glycosylase/lyase, which excises 5-methylcytosine (5-meC) and 5-hydroxymethylcytosine (5-hmeC), leaving an apyrimidinic (AP) site that is subsequently incised by the lyase activity. Is responsible for the demethylation of methylated cytosine residues of Tos17 retrotransposon DNA. Demethylation of Tos17 cytosine residues promotes its transposition. May be involved in seed development. The sequence is that of Protein ROS1C from Oryza sativa subsp. japonica (Rice).